The following is a 212-amino-acid chain: Ribonuclease HII (212 aa).

The region spanning 2–206 (TPLVGVDEAG…CERIRAEAEQ (205 aa)) is the RNase H type-2 domain. Positions 8, 9, and 101 each coordinate a divalent metal cation.

Belongs to the RNase HII family. It depends on Mn(2+) as a cofactor. Mg(2+) is required as a cofactor.

The protein localises to the cytoplasm. The enzyme catalyses Endonucleolytic cleavage to 5'-phosphomonoester.. Endonuclease that specifically degrades the RNA of RNA-DNA hybrids. The chain is Ribonuclease HII from Natronomonas pharaonis (strain ATCC 35678 / DSM 2160 / CIP 103997 / JCM 8858 / NBRC 14720 / NCIMB 2260 / Gabara) (Halobacterium pharaonis).